Reading from the N-terminus, the 62-residue chain is Andropin (62 aa).

Positions 1 to 22 are cleaved as a signal peptide; that stretch reads MKYFSVLVVLTLILAIVDQSDA.

Belongs to the andropin family. In terms of tissue distribution, ejaculatory duct of adult males.

The protein localises to the secreted. Functionally, male-specific peptide with moderate activity against Gram-positive bacteria. In Drosophila teissieri (Fruit fly), this protein is Andropin (Anp).